The sequence spans 489 residues: Protein MGF 505-2R (489 aa).

Belongs to the asfivirus MGF 505 family.

Its function is as follows. Plays a role in virus cell tropism, and may be required for efficient virus replication in macrophages. The sequence is that of Protein MGF 505-2R from Ornithodoros (relapsing fever ticks).